A 136-amino-acid chain; its full sequence is Ig kappa chain V-V region MOPC 21 (136 aa).

The signal sequence occupies residues 1–29; sequence MHQTSMGIKMESHTLVFISILLCLYGADG. The segment at 30–52 is framework-1; sequence NIVMTQSPKSMSMSVGERVTLTC. Positions 53–63 are complementarity-determining-1; the sequence is KASENVVTYVS. A framework-2 region spans residues 64–78; it reads WYQQKPEQSPKLLIY. The tract at residues 79 to 85 is complementarity-determining-2; it reads GASNRYT. The interval 86–117 is framework-3; it reads GVPDRFTGSGSATDFTLTISSVQAEDLADYHC. The segment at 118–126 is complementarity-determining-3; sequence GQGYSYPYT. Residues 127-136 are framework-4; sequence FGGGTKLEIK.

In Mus musculus (Mouse), this protein is Ig kappa chain V-V region MOPC 21.